Consider the following 511-residue polypeptide: Maturase K (511 aa).

The protein belongs to the intron maturase 2 family. MatK subfamily.

It is found in the plastid. The protein resides in the chloroplast. Its function is as follows. Usually encoded in the trnK tRNA gene intron. Probably assists in splicing its own and other chloroplast group II introns. This Melica altissima (Siberian melic grass) protein is Maturase K.